A 453-amino-acid polypeptide reads, in one-letter code: Tubulin alpha-1/2/3 chain (453 aa).

Gln11 is a GTP binding site. N6-acetyllysine is present on Lys40. Positions 71, 140, 144, 145, 179, 206, and 228 each coordinate GTP. Glu71 contacts Mg(2+). The active site involves Glu254. Residues 429-453 (EKDYEEVGTESQEGDGEEGEDGGDQ) form a disordered region. The segment covering 431–453 (DYEEVGTESQEGDGEEGEDGGDQ) has biased composition (acidic residues).

The protein belongs to the tubulin family. Dimer of alpha and beta chains. A typical microtubule is a hollow water-filled tube with an outer diameter of 25 nm and an inner diameter of 15 nM. Alpha-beta heterodimers associate head-to-tail to form protofilaments running lengthwise along the microtubule wall with the beta-tubulin subunit facing the microtubule plus end conferring a structural polarity. Microtubules usually have 13 protofilaments but different protofilament numbers can be found in some organisms and specialized cells. It depends on Mg(2+) as a cofactor. Post-translationally, acetylation of alpha chains at Lys-40 stabilizes microtubules and affects affinity and processivity of microtubule motors. This modification has a role in multiple cellular functions, ranging from cell motility, cell cycle progression or cell differentiation to intracellular trafficking and signaling.

It is found in the cytoplasm. It localises to the cytoskeleton. The enzyme catalyses GTP + H2O = GDP + phosphate + H(+). In terms of biological role, tubulin is the major constituent of microtubules, a cylinder consisting of laterally associated linear protofilaments composed of alpha- and beta-tubulin heterodimers. Microtubules grow by the addition of GTP-tubulin dimers to the microtubule end, where a stabilizing cap forms. Below the cap, tubulin dimers are in GDP-bound state, owing to GTPase activity of alpha-tubulin. In Naegleria gruberi (Amoeba), this protein is Tubulin alpha-1/2/3 chain (TBA1).